The sequence spans 178 residues: Interleukin-10 (178 aa).

A signal peptide spans 1–18 (MHSSALLCCLVFLTGVRA). 2 disulfides stabilise this stretch: Cys30-Cys126 and Cys80-Cys132. An N-linked (GlcNAc...) asparagine glycan is attached at Asn134.

This sequence belongs to the IL-10 family. As to quaternary structure, homodimer. Interacts with IL10RA and IL10RB.

It is found in the secreted. Major immune regulatory cytokine that acts on many cells of the immune system where it has profound anti-inflammatory functions, limiting excessive tissue disruption caused by inflammation. Mechanistically, IL10 binds to its heterotetrameric receptor comprising IL10RA and IL10RB leading to JAK1 and STAT2-mediated phosphorylation of STAT3. In turn, STAT3 translocates to the nucleus where it drives expression of anti-inflammatory mediators. Targets antigen-presenting cells (APCs) such as macrophages and monocytes and inhibits their release of pro-inflammatory cytokines including granulocyte-macrophage colony-stimulating factor /GM-CSF, granulocyte colony-stimulating factor/G-CSF, IL-1 alpha, IL-1 beta, IL-6, IL-8 and TNF-alpha. Also interferes with antigen presentation by reducing the expression of MHC-class II and co-stimulatory molecules, thereby inhibiting their ability to induce T cell activation. In addition, controls the inflammatory response of macrophages by reprogramming essential metabolic pathways including mTOR signaling. This chain is Interleukin-10 (IL10), found in Callithrix jacchus (White-tufted-ear marmoset).